Here is a 455-residue protein sequence, read N- to C-terminus: Argininosuccinate lyase (455 aa).

Belongs to the lyase 1 family. Argininosuccinate lyase subfamily.

It is found in the cytoplasm. The catalysed reaction is 2-(N(omega)-L-arginino)succinate = fumarate + L-arginine. The protein operates within amino-acid biosynthesis; L-arginine biosynthesis; L-arginine from L-ornithine and carbamoyl phosphate: step 3/3. This Shewanella baltica (strain OS223) protein is Argininosuccinate lyase.